The primary structure comprises 213 residues: MVFHYPNGRAYDYHKNENHPSLVNKVNHRSINHNRSKTIYGNRGMSLEEEINESNQYYLSQGIAVIHKKPIPIQIVSVDYPKRSAAVIKEAYFKQASTTDYNGVYKGKYLDFEAKETTNISSFPLRNFHAHQVEHMRACQKQGGICFTIVKFTKTDELFILPADLLFKYWDEQDKSRKSIPKAEIEQLGYKLNYSISPRIPFLKGVDLLIANS.

Residues T98, D100, E113, and Q132 each contribute to the Mg(2+) site.

It belongs to the RecU family. Mg(2+) is required as a cofactor.

It localises to the cytoplasm. The catalysed reaction is Endonucleolytic cleavage at a junction such as a reciprocal single-stranded crossover between two homologous DNA duplexes (Holliday junction).. In terms of biological role, endonuclease that resolves Holliday junction intermediates in genetic recombination. Cleaves mobile four-strand junctions by introducing symmetrical nicks in paired strands. Promotes annealing of linear ssDNA with homologous dsDNA. Required for DNA repair, homologous recombination and chromosome segregation. The polypeptide is Holliday junction resolvase RecU (Ligilactobacillus salivarius (strain UCC118) (Lactobacillus salivarius)).